The primary structure comprises 1204 residues: ATP-dependent helicase/nuclease subunit A (1204 aa).

In terms of domain architecture, UvrD-like helicase ATP-binding spans Thr2–Thr469. An ATP-binding site is contributed by Ala23 to Thr30. The 288-residue stretch at Gly497–Gly784 folds into the UvrD-like helicase C-terminal domain.

This sequence belongs to the helicase family. AddA subfamily. Heterodimer of AddA and AddB/RexB. It depends on Mg(2+) as a cofactor.

The enzyme catalyses Couples ATP hydrolysis with the unwinding of duplex DNA by translocating in the 3'-5' direction.. It catalyses the reaction ATP + H2O = ADP + phosphate + H(+). Functionally, the heterodimer acts as both an ATP-dependent DNA helicase and an ATP-dependent, dual-direction single-stranded exonuclease. Recognizes the chi site generating a DNA molecule suitable for the initiation of homologous recombination. The AddA nuclease domain is required for chi fragment generation; this subunit has the helicase and 3' -&gt; 5' nuclease activities. This Lactobacillus gasseri (strain ATCC 33323 / DSM 20243 / BCRC 14619 / CIP 102991 / JCM 1131 / KCTC 3163 / NCIMB 11718 / NCTC 13722 / AM63) protein is ATP-dependent helicase/nuclease subunit A.